Consider the following 114-residue polypeptide: T cell receptor beta variable 4-2 (114 aa).

The N-terminal stretch at 1–21 (MGCRLLCCAVLCLLGAVPMET) is a signal peptide. The Ig-like domain maps to 22–114 (GVTQTPRHLV…SALYLCASSQ (93 aa)). C42 and C110 are oxidised to a cystine. 2 N-linked (GlcNAc...) asparagine glycosylation sites follow: N76 and N89.

Alpha-beta TR is a heterodimer composed of an alpha and beta chain; disulfide-linked. The alpha-beta TR is associated with the transmembrane signaling CD3 coreceptor proteins to form the TR-CD3 (TcR or TCR). The assembly of alpha-beta TR heterodimers with CD3 occurs in the endoplasmic reticulum where a single alpha-beta TR heterodimer associates with one CD3D-CD3E heterodimer, one CD3G-CD3E heterodimer and one CD247 homodimer forming a stable octameric structure. CD3D-CD3E and CD3G-CD3E heterodimers preferentially associate with TR alpha and TR beta chains, respectively. The association of the CD247 homodimer is the last step of TcR assembly in the endoplasmic reticulum and is required for transport to the cell surface.

Its subcellular location is the cell membrane. V region of the variable domain of T cell receptor (TR) beta chain that participates in the antigen recognition. Alpha-beta T cell receptors are antigen specific receptors which are essential to the immune response and are present on the cell surface of T lymphocytes. Recognize peptide-major histocompatibility (MH) (pMH) complexes that are displayed by antigen presenting cells (APC), a prerequisite for efficient T cell adaptive immunity against pathogens. Binding of alpha-beta TR to pMH complex initiates TR-CD3 clustering on the cell surface and intracellular activation of LCK that phosphorylates the ITAM motifs of CD3G, CD3D, CD3E and CD247 enabling the recruitment of ZAP70. In turn ZAP70 phosphorylates LAT, which recruits numerous signaling molecules to form the LAT signalosome. The LAT signalosome propagates signal branching to three major signaling pathways, the calcium, the mitogen-activated protein kinase (MAPK) kinase and the nuclear factor NF-kappa-B (NF-kB) pathways, leading to the mobilization of transcription factors that are critical for gene expression and essential for T cell growth and differentiation. The T cell repertoire is generated in the thymus, by V-(D)-J rearrangement. This repertoire is then shaped by intrathymic selection events to generate a peripheral T cell pool of self-MH restricted, non-autoaggressive T cells. Post-thymic interaction of alpha-beta TR with the pMH complexes shapes TR structural and functional avidity. The polypeptide is T cell receptor beta variable 4-2 (Homo sapiens (Human)).